The primary structure comprises 298 residues: Nucleotide-binding protein MLBr00563 (298 aa).

21 to 28 lines the ATP pocket; that stretch reads GLSGAGRG. Residue 72-75 coordinates GTP; it reads DVRS.

This sequence belongs to the RapZ-like family.

Functionally, displays ATPase and GTPase activities. The protein is Nucleotide-binding protein MLBr00563 of Mycobacterium leprae (strain Br4923).